The following is a 374-amino-acid chain: Speckle-type POZ protein (374 aa).

The region spanning 31-161 is the MATH domain; the sequence is KFSYMWTINN…DDKLTLFCEV (131 aa). The segment at 71–191 is required for nuclear localization; sequence VNPKGLDEES…PDCRLADELG (121 aa). Residues 173–297 enclose the BTB domain; it reads QNTMNMVKVP…MCEDALCTSL (125 aa). Residues 297-355 form a homodimerization region; it reads LSVENAAEILILADLHSADQLKTQAVDFINYHASDVMETSGWKSMVASHPHLVAEAYRS.

This sequence belongs to the Tdpoz family. Homodimer. Part of cullin-RING-based BCR (BTB-CUL3-RBX1) E3 ubiquitin-protein ligase complexes that contain CUL3 and SPOP, plus a target protein.

It is found in the nucleus. The protein resides in the nucleus speckle. Its pathway is protein modification; protein ubiquitination. Its function is as follows. Component of a cullin-RING-based BCR (BTB-CUL3-RBX1) E3 ubiquitin-protein ligase complex that mediates the ubiquitination of target proteins, leading most often to their proteasomal degradation. This chain is Speckle-type POZ protein (spop), found in Danio rerio (Zebrafish).